We begin with the raw amino-acid sequence, 497 residues long: Probable cytosol aminopeptidase (497 aa).

Lysine 265 and aspartate 270 together coordinate Mn(2+). The active site involves lysine 277. Residues aspartate 288, aspartate 347, and glutamate 349 each coordinate Mn(2+). Residue arginine 351 is part of the active site.

It belongs to the peptidase M17 family. The cofactor is Mn(2+).

The protein resides in the cytoplasm. The enzyme catalyses Release of an N-terminal amino acid, Xaa-|-Yaa-, in which Xaa is preferably Leu, but may be other amino acids including Pro although not Arg or Lys, and Yaa may be Pro. Amino acid amides and methyl esters are also readily hydrolyzed, but rates on arylamides are exceedingly low.. The catalysed reaction is Release of an N-terminal amino acid, preferentially leucine, but not glutamic or aspartic acids.. Functionally, presumably involved in the processing and regular turnover of intracellular proteins. Catalyzes the removal of unsubstituted N-terminal amino acids from various peptides. The polypeptide is Probable cytosol aminopeptidase (Geobacillus sp. (strain WCH70)).